The following is a 165-amino-acid chain: Cytochrome c-type biogenesis protein CcmE (165 aa).

The Cytoplasmic portion of the chain corresponds to 1–29 (MSATAEDNARGAKPAGNFARTVSQRKRKR). Residues 30–50 (LFLIGGALAVLAVAVGLMLMA) form a helical; Signal-anchor for type II membrane protein membrane-spanning segment. The Periplasmic segment spans residues 51–165 (FSQDIRFFRT…LKEKGVWEGK (115 aa)). H143 and Y147 together coordinate heme.

The protein belongs to the CcmE/CycJ family.

It localises to the cell inner membrane. In terms of biological role, heme chaperone required for the biogenesis of c-type cytochromes. Transiently binds heme delivered by CcmC and transfers the heme to apo-cytochromes in a process facilitated by CcmF and CcmH. The sequence is that of Cytochrome c-type biogenesis protein CcmE from Brucella anthropi (strain ATCC 49188 / DSM 6882 / CCUG 24695 / JCM 21032 / LMG 3331 / NBRC 15819 / NCTC 12168 / Alc 37) (Ochrobactrum anthropi).